The chain runs to 301 residues: Phosphatidylglycerol--prolipoprotein diacylglyceryl transferase (301 aa).

Transmembrane regions (helical) follow at residues 17-37 (LAVRWYGLMYLVAFIMAIVVG), 59-79 (MLFYGVLGTILGGRFGYVLFY), 97-117 (GGMSFHGGFLGVTFAMILFAW), 129-149 (FVAPMVPAGLAAGRLGNFING), 203-223 (PSQLYEIALEGVVLFLVLWLF), 230-250 (VGAASAVFLIGYGLARFTVEF), and 257-277 (FLGLLALGLSMGQWLSLPMII). Position 142 (Arg142) interacts with a 1,2-diacyl-sn-glycero-3-phospho-(1'-sn-glycerol).

The protein belongs to the Lgt family.

The protein resides in the cell inner membrane. The enzyme catalyses L-cysteinyl-[prolipoprotein] + a 1,2-diacyl-sn-glycero-3-phospho-(1'-sn-glycerol) = an S-1,2-diacyl-sn-glyceryl-L-cysteinyl-[prolipoprotein] + sn-glycerol 1-phosphate + H(+). Its pathway is protein modification; lipoprotein biosynthesis (diacylglyceryl transfer). Functionally, catalyzes the transfer of the diacylglyceryl group from phosphatidylglycerol to the sulfhydryl group of the N-terminal cysteine of a prolipoprotein, the first step in the formation of mature lipoproteins. This chain is Phosphatidylglycerol--prolipoprotein diacylglyceryl transferase, found in Paraburkholderia phymatum (strain DSM 17167 / CIP 108236 / LMG 21445 / STM815) (Burkholderia phymatum).